A 307-amino-acid polypeptide reads, in one-letter code: Ribonuclease Z (307 aa).

Zn(2+) is bound by residues His61, His63, Asp65, His66, His138, Asp207, and His265. Asp65 functions as the Proton acceptor in the catalytic mechanism.

The protein belongs to the RNase Z family. As to quaternary structure, homodimer. Zn(2+) is required as a cofactor.

The catalysed reaction is Endonucleolytic cleavage of RNA, removing extra 3' nucleotides from tRNA precursor, generating 3' termini of tRNAs. A 3'-hydroxy group is left at the tRNA terminus and a 5'-phosphoryl group is left at the trailer molecule.. Zinc phosphodiesterase, which displays some tRNA 3'-processing endonuclease activity. Probably involved in tRNA maturation, by removing a 3'-trailer from precursor tRNA. The polypeptide is Ribonuclease Z (Methanothermobacter thermautotrophicus (strain ATCC 29096 / DSM 1053 / JCM 10044 / NBRC 100330 / Delta H) (Methanobacterium thermoautotrophicum)).